Consider the following 212-residue polypeptide: uncharacterized protein (212 aa).

A signal peptide spans 1-20 (MRRVLLCFLTLILLLPAASA).

This is an uncharacterized protein from Archaeoglobus fulgidus (strain ATCC 49558 / DSM 4304 / JCM 9628 / NBRC 100126 / VC-16).